The following is a 278-amino-acid chain: Splicing factor YJU2 (278 aa).

Cysteine 51, cysteine 54, cysteine 88, and cysteine 91 together coordinate Zn(2+). Residues 228-278 (HRQRTNKPGNNNDEKRTPLFNPTSTKGKIQKKSSVRTNPLGIVIKRGKSLK) are disordered. Short sequence motifs (nuclear localization signal) lie at residues 242 to 258 (KRTP…KIQK) and 260 to 278 (SSVR…KSLK).

The protein belongs to the CWC16 family. YJU2 subfamily. As to quaternary structure, component of the spliceosome. Present in the activated B complex, the catalytically activated B* complex which catalyzes the branching, the catalytic step 1 C complex catalyzing the exon ligation, and the postcatalytic P complex containing the ligated exons (mRNA) and the excised lariat intron. Interacts (via C-terminus) with CLF1. Interacts (via N-terminus) with SYF1. Interacts with U2 snRNA; this interaction is direct. Identified in the CWC complex (or CEF1-associated complex), a spliceosome sub-complex reminiscent of a late-stage spliceosome composed of the U2, U5 and U6 snRNAs and at least BUD13, BUD31, BRR2, CDC40, CEF1, CLF1, CUS1, CWC2, CWC15, CWC21, CWC22, CWC23, CWC24, CWC25, CWC27, ECM2, HSH155, IST3, ISY1, LEA1, MSL1, NTC20, PRP8, PRP9, PRP11, PRP19, PRP21, PRP22, PRP45, PRP46, SLU7, SMB1, SMD1, SMD2, SMD3, SMX2, SMX3, SNT309, SNU114, SPP2, SYF1, SYF2, RSE1 and YJU2.

Its subcellular location is the nucleus. Functionally, part of the spliceosome which catalyzes two sequential transesterification reactions, first the excision of the non-coding intron from pre-mRNA and then the ligation of the coding exons to form the mature mRNA. Plays a role (via N-terminus) in stabilizing the structure of the spliceosome catalytic core and docking of the branch helix into the active site, producing 5'-exon and lariat intron-3'-intermediates. Further stabilizes spliceosome conformation for 3'-splice site docking (via C-terminus) promoting exon ligation. The protein is Splicing factor YJU2 of Saccharomyces cerevisiae (strain ATCC 204508 / S288c) (Baker's yeast).